The chain runs to 335 residues: Lipoyl synthase (335 aa).

Residues 1–13 show a composition bias toward polar residues; that stretch reads MTIDTNPESSTPS. The disordered stretch occupies residues 1-29; that stretch reads MTIDTNPESSTPSAPAYNPSEKQKGSAKT. Residues Cys75, Cys80, Cys86, Cys101, Cys105, Cys108, and Ser315 each coordinate [4Fe-4S] cluster. In terms of domain architecture, Radical SAM core spans 86-304; the sequence is CFGKGTATFM…EEEAYKMGFA (219 aa).

The protein belongs to the radical SAM superfamily. Lipoyl synthase family. It depends on [4Fe-4S] cluster as a cofactor.

Its subcellular location is the cytoplasm. It carries out the reaction [[Fe-S] cluster scaffold protein carrying a second [4Fe-4S](2+) cluster] + N(6)-octanoyl-L-lysyl-[protein] + 2 oxidized [2Fe-2S]-[ferredoxin] + 2 S-adenosyl-L-methionine + 4 H(+) = [[Fe-S] cluster scaffold protein] + N(6)-[(R)-dihydrolipoyl]-L-lysyl-[protein] + 4 Fe(3+) + 2 hydrogen sulfide + 2 5'-deoxyadenosine + 2 L-methionine + 2 reduced [2Fe-2S]-[ferredoxin]. It functions in the pathway protein modification; protein lipoylation via endogenous pathway; protein N(6)-(lipoyl)lysine from octanoyl-[acyl-carrier-protein]: step 2/2. Catalyzes the radical-mediated insertion of two sulfur atoms into the C-6 and C-8 positions of the octanoyl moiety bound to the lipoyl domains of lipoate-dependent enzymes, thereby converting the octanoylated domains into lipoylated derivatives. The protein is Lipoyl synthase of Herminiimonas arsenicoxydans.